A 115-amino-acid chain; its full sequence is Large ribosomal subunit protein bL20 (115 aa).

The protein belongs to the bacterial ribosomal protein bL20 family.

Functionally, binds directly to 23S ribosomal RNA and is necessary for the in vitro assembly process of the 50S ribosomal subunit. It is not involved in the protein synthesizing functions of that subunit. This is Large ribosomal subunit protein bL20 from Synechococcus sp. (strain CC9311).